The chain runs to 640 residues: Threonine--tRNA ligase (640 aa).

The tract at residues 224–525 (DHRKLGKELD…LTEHYAGAFP (302 aa)) is catalytic. Residues cysteine 323, histidine 374, and histidine 502 each contribute to the Zn(2+) site.

It belongs to the class-II aminoacyl-tRNA synthetase family. Homodimer. It depends on Zn(2+) as a cofactor.

The protein localises to the cytoplasm. It catalyses the reaction tRNA(Thr) + L-threonine + ATP = L-threonyl-tRNA(Thr) + AMP + diphosphate + H(+). In terms of biological role, catalyzes the attachment of threonine to tRNA(Thr) in a two-step reaction: L-threonine is first activated by ATP to form Thr-AMP and then transferred to the acceptor end of tRNA(Thr). Also edits incorrectly charged L-seryl-tRNA(Thr). The polypeptide is Threonine--tRNA ligase (Tropheryma whipplei (strain Twist) (Whipple's bacillus)).